The following is a 195-amino-acid chain: FMN-dependent NADH:quinone oxidoreductase (195 aa).

Residues Ser-10, 16-18 (SQS), and 91-94 (MYNF) contribute to the FMN site.

This sequence belongs to the azoreductase type 1 family. Homodimer. It depends on FMN as a cofactor.

It carries out the reaction 2 a quinone + NADH + H(+) = 2 a 1,4-benzosemiquinone + NAD(+). The catalysed reaction is N,N-dimethyl-1,4-phenylenediamine + anthranilate + 2 NAD(+) = 2-(4-dimethylaminophenyl)diazenylbenzoate + 2 NADH + 2 H(+). Its function is as follows. Quinone reductase that provides resistance to thiol-specific stress caused by electrophilic quinones. Also exhibits azoreductase activity. Catalyzes the reductive cleavage of the azo bond in aromatic azo compounds to the corresponding amines. The chain is FMN-dependent NADH:quinone oxidoreductase from Aeromonas salmonicida (strain A449).